A 29-amino-acid polypeptide reads, in one-letter code: Cytochrome c oxidase subunit 7A1, mitochondrial (29 aa).

Over residues 1–13 (LENRVAEKQKLFQ) the composition is skewed to basic and acidic residues. The disordered stretch occupies residues 1–29 (LENRVAEKQKLFQEDNGLPVHLKGGATDN).

It belongs to the cytochrome c oxidase VIIa family. As to quaternary structure, component of the complex IV (CIV, cytochrome c oxidase), a multisubunit enzyme composed of 14 subunits. The complex is composed of a catalytic core of 3 subunits MT-CO1, MT-CO2 and MT-CO3, encoded in the mitochondrial DNA, and 11 supernumerary subunits COX4I1 (or COX4I2), COX5A, COX5B, COX6A2 (or COX6A1), COX6B1 (or COX6B2), COX6C, COX7A1 (or COX7A2), COX7B, COX7C, COX8B and NDUFA4, which are encoded in the nuclear genome. The complex exists as a monomer or a dimer and forms supercomplexes (SCs) in the inner mitochondrial membrane with NADH-ubiquinone oxidoreductase (complex I, CI) and ubiquinol-cytochrome c oxidoreductase (cytochrome b-c1 complex, complex III, CIII), resulting in different assemblies (supercomplex SCI(1)III(2)IV(1) and megacomplex MCI(2)III(2)IV(2)).

The protein localises to the mitochondrion inner membrane. It participates in energy metabolism; oxidative phosphorylation. Its function is as follows. Component of the mitochondrial respiratory complex IV (CIV, also named cytochrome c oxidase complex), the last enzyme in the mitochondrial electron transport chain which drives oxidative phosphorylation. The CIV complex is the component of the respiratory chain that catalyzes the reduction of oxygen to water. Acts as an assembly factor that specifically drives the homodimerization of CIV complexes, mediating the formation of mitochondrial respiratory supercomplexes (respirasomes) containing two CIV: supercomplxes with two molecules of CIV show improved activity. Despite being highly expressed in brown adipose tissue, not required for thermogenesis. This Ovis aries (Sheep) protein is Cytochrome c oxidase subunit 7A1, mitochondrial (COX7A1).